The primary structure comprises 343 residues: tRNA N6-adenosine threonylcarbamoyltransferase (343 aa).

Fe cation is bound by residues H116 and H120. Substrate contacts are provided by residues T139–G143, D172, G185, D189, and N280. D308 provides a ligand contact to Fe cation.

This sequence belongs to the KAE1 / TsaD family. Fe(2+) is required as a cofactor.

Its subcellular location is the cytoplasm. The enzyme catalyses L-threonylcarbamoyladenylate + adenosine(37) in tRNA = N(6)-L-threonylcarbamoyladenosine(37) in tRNA + AMP + H(+). Required for the formation of a threonylcarbamoyl group on adenosine at position 37 (t(6)A37) in tRNAs that read codons beginning with adenine. Is involved in the transfer of the threonylcarbamoyl moiety of threonylcarbamoyl-AMP (TC-AMP) to the N6 group of A37, together with TsaE and TsaB. TsaD likely plays a direct catalytic role in this reaction. This Cytophaga hutchinsonii (strain ATCC 33406 / DSM 1761 / CIP 103989 / NBRC 15051 / NCIMB 9469 / D465) protein is tRNA N6-adenosine threonylcarbamoyltransferase.